A 193-amino-acid polypeptide reads, in one-letter code: Ion-translocating oxidoreductase complex subunit A (193 aa).

6 consecutive transmembrane segments (helical) span residues 4–24, 39–59, 63–83, 102–122, 134–154, and 171–191; these read FLLL…QFLG, IGMS…SYLV, ILLP…VIAV, LLGI…VALL, VIYG…FAAM, and SISM…TGLV.

It belongs to the NqrDE/RnfAE family. As to quaternary structure, the complex is composed of six subunits: RnfA, RnfB, RnfC, RnfD, RnfE and RnfG.

It localises to the cell inner membrane. Part of a membrane-bound complex that couples electron transfer with translocation of ions across the membrane. The chain is Ion-translocating oxidoreductase complex subunit A from Pseudoalteromonas atlantica (strain T6c / ATCC BAA-1087).